Consider the following 103-residue polypeptide: Histone H4 (103 aa).

Over residues M1–G14 the composition is skewed to gly residues. Residues M1–R20 form a disordered region. An N-acetylthreonine modification is found at T2. K6 is subject to N6-acetyl-N6-methyllysine; alternate. An N6-acetyllysine mark is found at K6, K9, K13, and K17. Position 13 is an N6-acetyl-N6-methyllysine; alternate (K13). K21 is modified (N6,N6-dimethyllysine). The residue at position 32 (K32) is an N6-methyllysine.

Belongs to the histone H4 family. The nucleosome is a histone octamer containing two molecules each of H2A, H2B, H3 and H4 assembled in one H3-H4 heterotetramer and two H2A-H2B heterodimers. The octamer wraps approximately 147 bp of DNA.

It localises to the nucleus. The protein resides in the chromosome. Core component of nucleosome. Nucleosomes wrap and compact DNA into chromatin, limiting DNA accessibility to the cellular machineries which require DNA as a template. Histones thereby play a central role in transcription regulation, DNA repair, DNA replication and chromosomal stability. DNA accessibility is regulated via a complex set of post-translational modifications of histones, also called histone code, and nucleosome remodeling. Functionally, a mixture of histones H2B and H4 has antimicrobial activity against the Gram-positive bacterium M.luteus. This Penaeus vannamei (Whiteleg shrimp) protein is Histone H4.